Consider the following 353-residue polypeptide: Protein U67 (353 aa).

This sequence belongs to the herpesviridae UL95 family.

The sequence is that of Protein U67 (U67) from Human herpesvirus 6A (strain Uganda-1102) (HHV-6 variant A).